A 305-amino-acid chain; its full sequence is Methionyl-tRNA formyltransferase (305 aa).

S111–P114 contacts (6S)-5,6,7,8-tetrahydrofolate.

The protein belongs to the Fmt family.

It carries out the reaction L-methionyl-tRNA(fMet) + (6R)-10-formyltetrahydrofolate = N-formyl-L-methionyl-tRNA(fMet) + (6S)-5,6,7,8-tetrahydrofolate + H(+). Functionally, attaches a formyl group to the free amino group of methionyl-tRNA(fMet). The formyl group appears to play a dual role in the initiator identity of N-formylmethionyl-tRNA by promoting its recognition by IF2 and preventing the misappropriation of this tRNA by the elongation apparatus. In Campylobacter jejuni subsp. jejuni serotype O:23/36 (strain 81-176), this protein is Methionyl-tRNA formyltransferase.